The following is a 514-amino-acid chain: Carboxysome shell carbonic anhydrase (514 aa).

The interval 1-27 (MAYRNRNLASQTQRPLAPTAPRRRPVV) is disordered. Residue cysteine 175 participates in Zn(2+) binding. Aspartate 177 (proton acceptor) is an active-site residue. 2 residues coordinate Zn(2+): histidine 243 and cysteine 254.

The protein belongs to the beta-class carbonic anhydrase family. CsoSCA subfamily. As to quaternary structure, homodimer. Zn(2+) serves as cofactor.

The protein resides in the carboxysome. The enzyme catalyses hydrogencarbonate + H(+) = CO2 + H2O. Its function is as follows. Reversible hydration of carbon dioxide. Essential for photosynthetic carbon dioxide fixation, supplies CO(2) to RuBisCO (ribulose bisphosphate carboxylase, cbbL-cbbS) in the carboxysome. This is Carboxysome shell carbonic anhydrase from Prochlorococcus marinus (strain MIT 9313).